A 246-amino-acid chain; its full sequence is 3-deoxy-manno-octulosonate cytidylyltransferase (246 aa).

Belongs to the KdsB family.

Its subcellular location is the cytoplasm. The enzyme catalyses 3-deoxy-alpha-D-manno-oct-2-ulosonate + CTP = CMP-3-deoxy-beta-D-manno-octulosonate + diphosphate. It functions in the pathway nucleotide-sugar biosynthesis; CMP-3-deoxy-D-manno-octulosonate biosynthesis; CMP-3-deoxy-D-manno-octulosonate from 3-deoxy-D-manno-octulosonate and CTP: step 1/1. The protein operates within bacterial outer membrane biogenesis; lipopolysaccharide biosynthesis. Its function is as follows. Activates KDO (a required 8-carbon sugar) for incorporation into bacterial lipopolysaccharide in Gram-negative bacteria. In Chloroherpeton thalassium (strain ATCC 35110 / GB-78), this protein is 3-deoxy-manno-octulosonate cytidylyltransferase.